Here is a 98-residue protein sequence, read N- to C-terminus: NADH-ubiquinone oxidoreductase chain 4L (98 aa).

3 consecutive transmembrane segments (helical) span residues 1-21 (MSLT…GLLM), 29-49 (SLLC…ITIL), and 61-81 (IILL…LVMV).

The protein belongs to the complex I subunit 4L family. As to quaternary structure, core subunit of respiratory chain NADH dehydrogenase (Complex I) which is composed of 45 different subunits.

The protein localises to the mitochondrion inner membrane. The enzyme catalyses a ubiquinone + NADH + 5 H(+)(in) = a ubiquinol + NAD(+) + 4 H(+)(out). In terms of biological role, core subunit of the mitochondrial membrane respiratory chain NADH dehydrogenase (Complex I) which catalyzes electron transfer from NADH through the respiratory chain, using ubiquinone as an electron acceptor. Part of the enzyme membrane arm which is embedded in the lipid bilayer and involved in proton translocation. In Ectophylla alba (White bat), this protein is NADH-ubiquinone oxidoreductase chain 4L (MT-ND4L).